We begin with the raw amino-acid sequence, 245 residues long: Ribonuclease PH (245 aa).

Phosphate contacts are provided by residues R86 and 124-126 (GTR).

It belongs to the RNase PH family. Homohexameric ring arranged as a trimer of dimers.

It carries out the reaction tRNA(n+1) + phosphate = tRNA(n) + a ribonucleoside 5'-diphosphate. Functionally, phosphorolytic 3'-5' exoribonuclease that plays an important role in tRNA 3'-end maturation. Removes nucleotide residues following the 3'-CCA terminus of tRNAs; can also add nucleotides to the ends of RNA molecules by using nucleoside diphosphates as substrates, but this may not be physiologically important. Probably plays a role in initiation of 16S rRNA degradation (leading to ribosome degradation) during starvation. This chain is Ribonuclease PH, found in Bacillus cytotoxicus (strain DSM 22905 / CIP 110041 / 391-98 / NVH 391-98).